Reading from the N-terminus, the 271-residue chain is Tryptophan synthase alpha chain (271 aa).

Catalysis depends on proton acceptor residues Glu49 and Asp60.

Belongs to the TrpA family. Tetramer of two alpha and two beta chains.

The enzyme catalyses (1S,2R)-1-C-(indol-3-yl)glycerol 3-phosphate + L-serine = D-glyceraldehyde 3-phosphate + L-tryptophan + H2O. It participates in amino-acid biosynthesis; L-tryptophan biosynthesis; L-tryptophan from chorismate: step 5/5. The alpha subunit is responsible for the aldol cleavage of indoleglycerol phosphate to indole and glyceraldehyde 3-phosphate. The protein is Tryptophan synthase alpha chain of Burkholderia mallei (strain NCTC 10247).